The chain runs to 170 residues: Protein BofC (170 aa).

A signal peptide spans 1–30; sequence MKRFSTAYLLLGILCSAAVFLIGAPSRALG.

In terms of assembly, monomer.

The protein localises to the forespore intermembrane space. Inhibits the SpoIVB zymogen from undergoing autocatalytic activation by an unknown mechanism, and in this way plays a role in the sigma-K checkpoint of sporulation. The polypeptide is Protein BofC (bofC) (Bacillus subtilis (strain 168)).